Consider the following 369-residue polypeptide: Septin-5 (369 aa).

Phosphothreonine is present on T13. The Septin-type G domain occupies 41-314; that stretch reads KGFDFTLMVA…ENYRAHCIQQ (274 aa). The G1 motif stretch occupies residues 51–58; that stretch reads GESGLGKS. Residues 51–58, T85, and G111 contribute to the GTP site; that span reads GESGLGKS. The G3 motif stretch occupies residues 108–111; that stretch reads DTPG. Omega-N-methylarginine is present on R168. A G4 motif region spans residues 189–192; it reads AKAD. 190–198 is a GTP binding site; the sequence is KADCLVPSE. Phosphoserine is present on S225. 2 residues coordinate GTP: G248 and R263. The residue at position 327 (S327) is a Phosphoserine. T336 carries the post-translational modification Phosphothreonine. Positions 338 to 369 form a coiled coil; sequence DAETEKLIRMKDEELRRMQEMLQKMKQQMQDQ.

It belongs to the TRAFAC class TrmE-Era-EngA-EngB-Septin-like GTPase superfamily. Septin GTPase family. Septins polymerize into heterooligomeric protein complexes that form filaments, and can associate with cellular membranes, actin filaments and microtubules. GTPase activity is required for filament formation. Interacts with SEPTIN2 and SEPTIN5. Interaction with SEPTIN4 not detected. In platelets, associated with a complex containing STX4. Interacts with PRKN; this interaction leads to SEPTIN5 ubiquitination and degradation. Interacts with DYRK1A. Interacts with STX1A; in the cerebellar cortex. In terms of processing, phosphorylated by DYRK1A.

The protein localises to the cytoplasm. The protein resides in the cytoskeleton. Functionally, filament-forming cytoskeletal GTPase. Involved in cytokinesis (Potential). May play a role in platelet secretion. The chain is Septin-5 from Mus musculus (Mouse).